The primary structure comprises 479 residues: PTS system sucrose-specific EIIBC component (479 aa).

The 84-residue stretch at 4–87 folds into the PTS EIIB type-1 domain; the sequence is PAVAKELLTL…AKLTGMSEMS (84 aa). Cys26 acts as the Phosphocysteine intermediate; for EIIB activity in catalysis. 11 consecutive transmembrane segments (helical) span residues 112–132, 158–178, 182–202, 204–224, 232–252, 264–284, 303–323, 345–365, 376–396, 403–423, and 448–468; these read IFVPIIPAIVAGGLLMGIYNL, MINTFANAPFVYLPILLAFSA, FGGNPYLGAALGMLMVHPDLL, GWGFGGASVSGNIPVWNILGF, QGSVLPVLVSAFILAKVELGL, LTPLLAIFIAGLLTFTVVGPF, AGFVGGAVFGLIYAPFVITGM, FIFPIAAMSNVSQGAAALAVG, IAIPSGVTGLLGITEPAMFGV, PFIAAVCAAALSSAFITMFNV, and IAGMVIAFLTAFVLTIVLGIG. The PTS EIIC type-1 domain occupies 120–477; that stretch reads IVAGGLLMGI…GDRAKVGKKA (358 aa).

It is found in the cell inner membrane. It carries out the reaction N(pros)-phospho-L-histidyl-[protein](out) + sucrose = sucrose 6(G)-phosphate(in) + L-histidyl-[protein]. Functionally, the phosphoenolpyruvate-dependent sugar phosphotransferase system (sugar PTS), a major carbohydrate active transport system, catalyzes the phosphorylation of incoming sugar substrates concomitantly with their translocation across the cell membrane. This system is involved in sucrose transport. The sequence is that of PTS system sucrose-specific EIIBC component from Vibrio alginolyticus.